The sequence spans 431 residues: Foot protein 1 variant 2 (431 aa).

An N-terminal signal peptide occupies residues 1–20; that stretch reads MARNMNILTLFAVLLGSASA. Tyr22 is subject to 3',4'-dihydroxyphenylalanine. 4-hydroxyproline is present on Pro33. The stretch at 41–50 is one A-1; approximate repeat; that stretch reads VPPPAWTAWK. A 13 X 10 AA A-P-P-P-A-W-T-A-W-K region spans residues 41-270; it reads VPPPAWTAWK…APPPAWTAWK (230 aa). A 7'-hydroxytryptophan mark is found at Trp46, Trp49, Trp56, and Trp59. C-linked (Man) hydroxytryptophan glycosylation is found at Trp46, Trp49, Trp56, and Trp59. The A-2; approximate repeat unit spans residues 51–60; it reads AHPPAWTAWK. A B-1 repeat occupies 61–70; the sequence is ATPKPWTAWK. The segment at 61–310 is 27 X 10 AA A-T-P-K-P-W-T-A-W-K; the sequence is ATPKPWTAWK…ATPKPWTAWR (250 aa). Pro65 carries the 4-hydroxyproline modification. The C-linked (Man) tryptophan glycan is linked to Trp66. Trp69 carries the 7'-hydroxytryptophan modification. Trp69 is a glycosylation site (C-linked (Man) hydroxytryptophan). The A-3 repeat unit spans residues 71–80; the sequence is APPPAWTAWK. Residues Pro72, Pro73, and Pro74 each carry the 4-hydroxyproline modification. 7'-hydroxytryptophan occurs at positions 76 and 79. 2 C-linked (Man) hydroxytryptophan glycosylation sites follow: Trp76 and Trp79. Residues 81–90 form a B-2 repeat; that stretch reads ATPKPWTAWK. 4-hydroxyproline is present on Pro85. Trp86 carries a C-linked (Man) tryptophan glycan. Trp89 carries the post-translational modification 7'-hydroxytryptophan. Trp89 carries C-linked (Man) hydroxytryptophan glycosylation. One copy of the A-4; approximate repeat lies at 91–100; sequence APPPTWTAWK. 4-hydroxyproline is present on residues Pro92, Pro93, and Pro94. Trp96 and Trp99 each carry 7'-hydroxytryptophan. Residues Trp96 and Trp99 are each glycosylated (C-linked (Man) hydroxytryptophan). One copy of the B-3 repeat lies at 101–110; that stretch reads ATPKPWTAWK. Position 105 is a 4-hydroxyproline (Pro105). A glycan (C-linked (Man) tryptophan) is linked at Trp106. 7'-hydroxytryptophan is present on Trp109. Residue Trp109 is glycosylated (C-linked (Man) hydroxytryptophan). The A-5; approximate repeat unit spans residues 111–120; that stretch reads APPPVWTAWK. 4-hydroxyproline occurs at positions 112, 113, and 114. 7'-hydroxytryptophan occurs at positions 116 and 119. C-linked (Man) hydroxytryptophan glycans are attached at residues Trp116 and Trp119. The stretch at 121-130 is one B-4; approximate repeat; sequence ATPKPRTAWK. The residue at position 125 (Pro125) is a 4-hydroxyproline. At Trp129 the chain carries 7'-hydroxytryptophan. Trp129 carries a C-linked (Man) hydroxytryptophan glycan. The A-6; approximate repeat unit spans residues 131–140; it reads APPPTWTAWK. Residues Pro132, Pro133, and Pro134 each carry the 4-hydroxyproline modification. 7'-hydroxytryptophan occurs at positions 136 and 139. C-linked (Man) hydroxytryptophan glycans are attached at residues Trp136 and Trp139. A B-5; approximate repeat occupies 141–150; the sequence is AAPKPWTAWK. The residue at position 145 (Pro145) is a 4-hydroxyproline. Trp146 carries a C-linked (Man) tryptophan glycan. Residue Trp149 is modified to 7'-hydroxytryptophan. A C-linked (Man) hydroxytryptophan glycan is attached at Trp149. A B-6 repeat occupies 151 to 160; that stretch reads ATPKPWTAWK. Pro155 carries the 4-hydroxyproline modification. Residue Trp156 is glycosylated (C-linked (Man) tryptophan). Trp159 carries the 7'-hydroxytryptophan modification. Trp159 is a glycosylation site (C-linked (Man) hydroxytryptophan). The stretch at 161–170 is one A-7 repeat; that stretch reads APPPAWTAWK. 3 positions are modified to 4-hydroxyproline: Pro162, Pro163, and Pro164. 7'-hydroxytryptophan occurs at positions 166 and 169. C-linked (Man) hydroxytryptophan glycans are attached at residues Trp166 and Trp169. One copy of the B-7 repeat lies at 171 to 180; sequence ATPKPWTAWK. Pro175 carries the 4-hydroxyproline modification. C-linked (Man) tryptophan glycosylation occurs at Trp176. Trp179 carries the 7'-hydroxytryptophan modification. The C-linked (Man) hydroxytryptophan glycan is linked to Trp179. The stretch at 181 to 190 is one B-8 repeat; the sequence is ATPKPWTAWK. A 4-hydroxyproline modification is found at Pro185. Trp186 carries a C-linked (Man) tryptophan glycan. Trp189 bears the 7'-hydroxytryptophan mark. The C-linked (Man) hydroxytryptophan glycan is linked to Trp189. The B-9 repeat unit spans residues 191 to 200; that stretch reads ATPKPWTAWK. Pro195 is subject to 4-hydroxyproline. Trp196 is a glycosylation site (C-linked (Man) tryptophan). Position 199 is a 7'-hydroxytryptophan (Trp199). Trp199 carries a C-linked (Man) hydroxytryptophan glycan. The B-10; approximate repeat unit spans residues 201–210; that stretch reads ATPKPWTVWK. Position 205 is a 4-hydroxyproline (Pro205). C-linked (Man) tryptophan glycosylation is present at Trp206. 7'-hydroxytryptophan is present on Trp209. Trp209 is a glycosylation site (C-linked (Man) hydroxytryptophan). The B-11 repeat unit spans residues 211 to 220; that stretch reads ATPKPWTAWK. Pro215 carries the post-translational modification 4-hydroxyproline. A glycan (C-linked (Man) tryptophan) is linked at Trp216. A 7'-hydroxytryptophan modification is found at Trp219. C-linked (Man) hydroxytryptophan glycosylation is present at Trp219. The stretch at 221–230 is one A-8 repeat; sequence APPPAWTAWK. 4-hydroxyproline is present on residues Pro222, Pro223, and Pro224. 7'-hydroxytryptophan occurs at positions 226 and 229. C-linked (Man) hydroxytryptophan glycosylation is found at Trp226 and Trp229. The B-12 repeat unit spans residues 231 to 240; that stretch reads ATPKPWTAWK. 4-hydroxyproline is present on Pro235. A C-linked (Man) tryptophan glycan is attached at Trp236. Trp239 carries the 7'-hydroxytryptophan modification. Residue Trp239 is glycosylated (C-linked (Man) hydroxytryptophan). Residues 241-250 form an A-9 repeat; that stretch reads APPPAWTAWK. 3 positions are modified to 4-hydroxyproline: Pro242, Pro243, and Pro244. 7'-hydroxytryptophan occurs at positions 246 and 249. Trp246 and Trp249 each carry a C-linked (Man) hydroxytryptophan glycan. The B-13 repeat unit spans residues 251–260; the sequence is ATPKPWTAWK. The residue at position 255 (Pro255) is a 4-hydroxyproline. C-linked (Man) tryptophan glycosylation is present at Trp256. 7'-hydroxytryptophan is present on Trp259. C-linked (Man) hydroxytryptophan glycosylation is present at Trp259. The stretch at 261-270 is one A-10 repeat; sequence APPPAWTAWK. Residues Pro262, Pro263, and Pro264 each carry the 4-hydroxyproline modification. Residues Trp266 and Trp269 each carry the 7'-hydroxytryptophan modification. C-linked (Man) hydroxytryptophan glycans are attached at residues Trp266 and Trp269. The B-14 repeat unit spans residues 271-280; sequence ATPKPWTAWK. A 4-hydroxyproline modification is found at Pro275. C-linked (Man) tryptophan glycosylation occurs at Trp276. Position 279 is a 7'-hydroxytryptophan (Trp279). Residue Trp279 is glycosylated (C-linked (Man) hydroxytryptophan). The stretch at 281-290 is one B-15 repeat; sequence ATPKPWTAWK. At Pro285 the chain carries 4-hydroxyproline. A C-linked (Man) tryptophan glycan is attached at Trp286. Trp289 carries the 7'-hydroxytryptophan modification. A glycan (C-linked (Man) hydroxytryptophan) is linked at Trp289. A B-16 repeat occupies 291-300; sequence ATPKPWTAWK. Residue Pro295 is modified to 4-hydroxyproline. C-linked (Man) tryptophan glycosylation is present at Trp296. A 7'-hydroxytryptophan modification is found at Trp299. Residue Trp299 is glycosylated (C-linked (Man) hydroxytryptophan). The stretch at 301–310 is one B-17; approximate repeat; sequence ATPKPWTAWR. Position 305 is a 4-hydroxyproline (Pro305). The C-linked (Man) tryptophan glycan is linked to Trp306. Trp309 is modified (7'-hydroxytryptophan). Trp309 carries C-linked (Man) hydroxytryptophan glycosylation. Residues 322-377 are disordered; that stretch reads GHGYGGYGKPGKPGKPGSKGPRGPAGPPGATGKTGRTGATGKRGPPGYPGKPGVPG. Residues 323–332 show a composition bias toward gly residues; it reads HGYGGYGKPG. Residues 329–380 enclose the Collagen-like domain; the sequence is GKPGKPGKPGSKGPRGPAGPPGATGKTGRTGATGKRGPPGYPGKPGVPGRNG. Positions 336–366 are enriched in low complexity; sequence KPGSKGPRGPAGPPGATGKTGRTGATGKRGP. A 4-hydroxyproline mark is found at Pro367, Pro370, and Pro376.

Produced by the byssal gland.

The protein localises to the secreted. Its function is as follows. Provides adhesiveness to the mussel's foot. Mussels produce one of the strongest water insoluble glues. The mussel's adhesive is a bundle of threads, called a byssus, formed by a fibrous collagenous core coated with adhesive proteins. This Perna viridis (Asian green mussel) protein is Foot protein 1 variant 2.